A 199-amino-acid polypeptide reads, in one-letter code: Recombination protein RecR (199 aa).

The C4-type zinc finger occupies 57 to 72 (CQSCRTYTEETLCPIC). The Toprim domain occupies 81 to 176 (STICVVETPA…MISRIAHGVP (96 aa)).

Belongs to the RecR family.

In terms of biological role, may play a role in DNA repair. It seems to be involved in an RecBC-independent recombinational process of DNA repair. It may act with RecF and RecO. The chain is Recombination protein RecR from Shewanella baltica (strain OS195).